Here is a 167-residue protein sequence, read N- to C-terminus: DNA-directed RNA polymerase II subunit rpb-9 (167 aa).

A disordered region spans residues 28 to 49; it reads DDMYDQNGASPAPSQNEKPGKS. Positions 34–44 are enriched in polar residues; it reads NGASPAPSQNE. The Zn(2+) site is built by Cys59, Cys62, Cys81, Cys84, Cys128, Cys131, Cys156, and Cys161. The segment at 59 to 84 adopts a C4-type zinc-finger fold; that stretch reads CPECNNMLYPREDKESRVLMYSCRNC. Residues 124-166 form a TFIIS-type zinc finger; that stretch reads EEHQCPVCGKSKAVFFQAQTKKAEEEMRLYYVCASQDCQHRWT.

It belongs to the archaeal RpoM/eukaryotic RPA12/RPB9/RPC11 RNA polymerase family. In terms of assembly, component of the RNA polymerase II (Pol II) complex consisting of 12 subunits. Expressed in the soma and in the germline.

Its subcellular location is the nucleus. It localises to the nucleolus. Functionally, DNA-dependent RNA polymerase catalyzes the transcription of DNA into RNA using the four ribonucleoside triphosphates as substrates. Component of RNA polymerase II which synthesizes mRNA precursors and many functional non-coding RNAs. Pol II is the central component of the basal RNA polymerase II transcription machinery. It is composed of mobile elements that move relative to each other. RPB9 is part of the upper jaw surrounding the central large cleft and thought to grab the incoming DNA template. Recruits ints-6, a component of the Integrator complex to PIWI-interacting RNA (piRNA) genes, to mediate Integrator complex-dependent cleavage of 3' ends of nascent transcripts upon RNA Pol II backtracking to terminate transcription and generate piRNA precursors. Promotes the biogenesis of secondary 22G-siRNAs (a class of 22 nucleotide siRNAs that possess a triphosphorylated guanine residue at the 5'-end). Involved in gene silencing mediated by a class of 21 nucleotide piRNAs that possess a uracil residue at the 5'-end (also called 21U-RNAs) and guide the Piwi protein prg-1 to its DNA targets for silencing. Plays a role in small RNA-directed transgenerational epigenetic inheritance (also called RNAe) over several generations. Not required for the transgenerational inheritance of exogenous small interfering RNAs (RNAi). May play a role in the silencing of the DNA transposable elements from the DNA transposon families, Chapaev-2 and CEMUDR1. This is DNA-directed RNA polymerase II subunit rpb-9 from Caenorhabditis elegans.